Reading from the N-terminus, the 228-residue chain is Ferric nitrobindin-like protein (228 aa).

Residues 1–21 (MTSDEVRDGAGSPADSSKGNK) are disordered. The GXWXGXG motif lies at 75 to 81 (GVWRGEG).

Belongs to the nitrobindin family.

The sequence is that of Ferric nitrobindin-like protein from Mycobacterium leprae (strain TN).